The primary structure comprises 300 residues: FeMo cofactor biosynthesis protein NifB (300 aa).

The Radical SAM core domain maps to 24–266 (HDKVGRVHLP…PQFRACGQCR (243 aa)). Cys-38, Cys-42, and Cys-45 together coordinate [4Fe-4S] cluster. Residues Gly-93, Thr-144, and Ile-196 each coordinate S-adenosyl-L-methionine. Positions 262 and 265 each coordinate [4Fe-4S] cluster.

It belongs to the radical SAM superfamily. NifB family. In terms of assembly, monomer. [4Fe-4S] cluster is required as a cofactor.

It participates in cofactor biosynthesis; Fe-Mo cofactor biosynthesis. Functionally, involved in the biosynthesis of the iron-molybdenum cofactor (FeMo-co or M-cluster) found in the dinitrogenase enzyme of the nitrogenase complex in nitrogen-fixing microorganisms. NifB catalyzes the crucial step of radical SAM-dependent carbide insertion that occurs concomitant with the insertion of a 9th sulfur and the rearrangement/coupling of two [4Fe-4S] clusters into a [8Fe-9S-C] cluster, the precursor to the M-cluster. This is FeMo cofactor biosynthesis protein NifB from Methanocaldococcus jannaschii (strain ATCC 43067 / DSM 2661 / JAL-1 / JCM 10045 / NBRC 100440) (Methanococcus jannaschii).